Here is a 516-residue protein sequence, read N- to C-terminus: uncharacterized protein (516 aa).

Residues 1 to 35 (MAERTSESSSESASFDLEKQQSNHHDRYQSSVSSE) form a disordered region. Over residues 16 to 28 (DLEKQQSNHHDRY) the composition is skewed to basic and acidic residues. The residue at position 31 (Ser31) is a Phosphoserine. The next 12 helical transmembrane spans lie at 77–97 (VAVM…FSGA), 111–131 (VALL…VVWA), 143–163 (MIIA…AKDI), 166–186 (VMIC…TVAG), 198–218 (GLVI…SPIV), 231–251 (WTSY…IIFH), 301–321 (LLIF…VYGI), 345–365 (SLPY…VALF), 386–406 (LPSM…LAWT), 412–432 (IHWI…ITIF), 439–461 (IIDC…RSSF), and 481–501 (AGSL…MLFL).

Belongs to the major facilitator superfamily.

It is found in the membrane. This is an uncharacterized protein from Schizosaccharomyces pombe (strain 972 / ATCC 24843) (Fission yeast).